The sequence spans 1192 residues: DNA topoisomerase 2 (1192 aa).

Residues Asn64, Asn95, and 142–149 (GTNGVGLK) each bind ATP. Positions 438, 539, and 541 each coordinate Mg(2+). In terms of domain architecture, Topo IIA-type catalytic spans 707–1174 (IPNFLDGMTR…PGASVWLEEI (468 aa)). Catalysis depends on Tyr800, which acts as the O-(5'-phospho-DNA)-tyrosine intermediate.

This sequence belongs to the type II topoisomerase family. Mg(2+) is required as a cofactor. The cofactor is Mn(2+). It depends on Ca(2+) as a cofactor.

The protein localises to the host cytoplasm. It carries out the reaction ATP-dependent breakage, passage and rejoining of double-stranded DNA.. Functionally, type II topoisomerase. Processively relaxes supercoiled DNA. Displays DNA-supercoiling activity only when associated with the viral histone-like protein. In Ornithodoros (relapsing fever ticks), this protein is DNA topoisomerase 2.